An 801-amino-acid polypeptide reads, in one-letter code: Growth-differentiation transition protein 7 (801 aa).

An N-terminal signal peptide occupies residues 1-22 (MIKTILIKLILLVIFCYHFLFA).

This sequence belongs to the GDT family.

The protein localises to the secreted. This is Growth-differentiation transition protein 7 (gdt7) from Dictyostelium discoideum (Social amoeba).